A 428-amino-acid polypeptide reads, in one-letter code: Tyrosine--tRNA ligase (428 aa).

Tyrosine 36 contacts L-tyrosine. The short motif at proline 41–serine 50 is the 'HIGH' region element. Tyrosine 169 and glutamine 173 together coordinate L-tyrosine. The 'KMSKS' region motif lies at lysine 229 to threonine 233. Lysine 232 contacts ATP. Positions isoleucine 361–valine 427 constitute an S4 RNA-binding domain.

Belongs to the class-I aminoacyl-tRNA synthetase family. TyrS type 1 subfamily. In terms of assembly, homodimer.

The protein resides in the cytoplasm. It carries out the reaction tRNA(Tyr) + L-tyrosine + ATP = L-tyrosyl-tRNA(Tyr) + AMP + diphosphate + H(+). In terms of biological role, catalyzes the attachment of tyrosine to tRNA(Tyr) in a two-step reaction: tyrosine is first activated by ATP to form Tyr-AMP and then transferred to the acceptor end of tRNA(Tyr). This Syntrophus aciditrophicus (strain SB) protein is Tyrosine--tRNA ligase.